Here is a 58-residue protein sequence, read N- to C-terminus: Large ribosomal subunit protein bL32 (58 aa).

It belongs to the bacterial ribosomal protein bL32 family.

The sequence is that of Large ribosomal subunit protein bL32 from Sulfurihydrogenibium sp. (strain YO3AOP1).